Here is a 62-residue protein sequence, read N- to C-terminus: Conorfamide-Tx1 (62 aa).

The first 19 residues, 1 to 19 (MSGRGFLLLALLLLVTVEA), serve as a signal peptide directing secretion. Positions 20–26 (TKVEKNK) are excised as a propeptide. Tyrosine amide is present on Tyr46. A propeptide spanning residues 47-62 (GRRDMQSPLLSERLRF) is cleaved from the precursor.

This sequence belongs to the FARP (FMRFamide related peptide) family. Expressed by the venom duct.

It is found in the secreted. Its function is as follows. This peptide does not show activity on human and mouse sensory neuron-specific G-protein coupled receptors MRGPRX1. The chain is Conorfamide-Tx1 from Conus textile (Cloth-of-gold cone).